The chain runs to 272 residues: Nitrogenase iron protein (272 aa).

Residue 8–15 (GKGGIGKS) participates in ATP binding. Residue Cys94 coordinates [4Fe-4S] cluster. Residue Arg97 is modified to ADP-ribosylarginine; by dinitrogenase reductase ADP-ribosyltransferase. Position 129 (Cys129) interacts with [4Fe-4S] cluster.

The protein belongs to the NifH/BchL/ChlL family. As to quaternary structure, homodimer. Requires [4Fe-4S] cluster as cofactor. In terms of processing, the reversible ADP-ribosylation of Arg-97 inactivates the nitrogenase reductase and regulates nitrogenase activity.

The enzyme catalyses N2 + 8 reduced [2Fe-2S]-[ferredoxin] + 16 ATP + 16 H2O = H2 + 8 oxidized [2Fe-2S]-[ferredoxin] + 2 NH4(+) + 16 ADP + 16 phosphate + 6 H(+). The key enzymatic reactions in nitrogen fixation are catalyzed by the nitrogenase complex, which has 2 components: the iron protein and the molybdenum-iron protein. This chain is Nitrogenase iron protein, found in Desulforamulus reducens (strain ATCC BAA-1160 / DSM 100696 / MI-1) (Desulfotomaculum reducens).